We begin with the raw amino-acid sequence, 200 residues long: Small ribosomal subunit protein uS4 (200 aa).

Positions 22 to 42 (TGKELEKRPYAPGPHGPGQRK) are disordered. Positions 92–155 (ARLDNVVYKL…RNLSIIKESV (64 aa)) constitute an S4 RNA-binding domain.

Belongs to the universal ribosomal protein uS4 family. In terms of assembly, part of the 30S ribosomal subunit. Contacts protein S5. The interaction surface between S4 and S5 is involved in control of translational fidelity.

In terms of biological role, one of the primary rRNA binding proteins, it binds directly to 16S rRNA where it nucleates assembly of the body of the 30S subunit. Its function is as follows. With S5 and S12 plays an important role in translational accuracy. The sequence is that of Small ribosomal subunit protein uS4 from Bacillus velezensis (strain DSM 23117 / BGSC 10A6 / LMG 26770 / FZB42) (Bacillus amyloliquefaciens subsp. plantarum).